A 236-amino-acid chain; its full sequence is Small ribosomal subunit protein uS3 (236 aa).

Residues I39 to R107 enclose the KH type-2 domain. The disordered stretch occupies residues A214–A236.

It belongs to the universal ribosomal protein uS3 family. Part of the 30S ribosomal subunit. Forms a tight complex with proteins S10 and S14.

Functionally, binds the lower part of the 30S subunit head. Binds mRNA in the 70S ribosome, positioning it for translation. The protein is Small ribosomal subunit protein uS3 of Brucella anthropi (strain ATCC 49188 / DSM 6882 / CCUG 24695 / JCM 21032 / LMG 3331 / NBRC 15819 / NCTC 12168 / Alc 37) (Ochrobactrum anthropi).